The sequence spans 63 residues: Large ribosomal subunit protein bL28 (63 aa).

Belongs to the bacterial ribosomal protein bL28 family.

This Clostridium botulinum (strain Alaska E43 / Type E3) protein is Large ribosomal subunit protein bL28.